The following is a 310-amino-acid chain: GPN-loop GTPase 2 (310 aa).

Alanine 2 is modified (N-acetylalanine). 19-24 contacts GTP; that stretch reads GSGKTT. The Gly-Pro-Asn (GPN)-loop; involved in dimer interface motif lies at 76-78; sequence GPN. 178 to 181 contacts GTP; sequence SKMD.

It belongs to the GPN-loop GTPase family. Heterodimers with GPN1 or GPN3. Binds to RNA polymerase II (RNAPII).

Its function is as follows. Small GTPase required for proper localization of RNA polymerase II and III (RNAPII and RNAPIII). May act at an RNAP assembly step prior to nuclear import. In Mus musculus (Mouse), this protein is GPN-loop GTPase 2.